Reading from the N-terminus, the 307-residue chain is MTEQATKPRNSSHLIGGFFGGLTSAVALQPLDLLKTRIQQDKKATLWKNLKEIDSPLQLWRGTLPSALRTSIGSALYLSCLNLMRSSLAKRRNAVPSLTNDSNIVYNKSSSLPRLTMYENLLTGAFARGLVGYITMPITVIKVRYESTLYNYSSLKEAITHIYTKEGLFGFFRGFGATCLRDAPYAGLYVLLYEKSKQLLPMVLPSRFIHYNPEGGFTTYTSTTVNTTSAVLSASLATTVTAPFDTIKTRMQLEPSKFTNSFNTFTSIVKNENVLKLFSGLSMRLARKALSAGIAWGIYEELVKRFM.

Solcar repeat units lie at residues 8–87 (PRNS…MRSS), 115–199 (LTMY…SKQL), and 221–305 (TSTT…LVKR). Transmembrane regions (helical) follow at residues 14 to 39 (LIGGFFGGLTSAVALQPLDLLKTRIQ), 62 to 88 (GTLPSALRTSIGSALYLSCLNLMRSSL), 121 to 146 (LLTGAFARGLVGYITMPITVIKVRYE), 174 to 197 (GFGATCLRDAPYAGLYVLLYEKSK), 225 to 251 (VNTTSAVLSASLATTVTAPFDTIKTRM), and 280 to 298 (GLSMRLARKALSAGIAWGI).

Belongs to the mitochondrial carrier (TC 2.A.29) family. SLC25A38 subfamily.

Its subcellular location is the mitochondrion inner membrane. The enzyme catalyses glycine(in) = glycine(out). Mitochondrial glycine transporter that imports glycine into the mitochondrial matrix. Plays an important role in providing glycine for the first enzymatic step in heme biosynthesis, the condensation of glycine with succinyl-CoA to produce 5-aminolevulinate (ALA) in the mitochondrial matrix. The chain is Mitochondrial glycine transporter from Saccharomyces cerevisiae (strain RM11-1a) (Baker's yeast).